The sequence spans 305 residues: Probable lipid kinase YegS-like (305 aa).

The DAGKc domain maps to 1-129 (MTQRRAMLIL…VDLGEVGGKL (129 aa)). Residues Thr-39, 65–71 (GDGTLRD), and Thr-92 contribute to the ATP site. Leu-210, Asp-213, and Leu-215 together coordinate Mg(2+). The active-site Proton acceptor is Glu-268.

Belongs to the diacylglycerol/lipid kinase family. YegS lipid kinase subfamily. Mg(2+) is required as a cofactor. It depends on Ca(2+) as a cofactor.

The protein localises to the cytoplasm. In terms of biological role, probably phosphorylates lipids; the in vivo substrate is unknown. The sequence is that of Probable lipid kinase YegS-like from Pseudomonas syringae pv. tomato (strain ATCC BAA-871 / DC3000).